We begin with the raw amino-acid sequence, 95 residues long: Small ribosomal subunit protein bS21 (95 aa).

A disordered region spans residues 56-95; that stretch reads KLARKKMQREGLLPMKPKPVFGAGPGAGRGGPAAGPRGPR. Positions 78–88 are enriched in gly residues; that stretch reads AGPGAGRGGPA.

The protein belongs to the bacterial ribosomal protein bS21 family.

This Nitrobacter winogradskyi (strain ATCC 25391 / DSM 10237 / CIP 104748 / NCIMB 11846 / Nb-255) protein is Small ribosomal subunit protein bS21.